We begin with the raw amino-acid sequence, 277 residues long: Cell division protein ZipA (277 aa).

Residues 1–5 lie on the Periplasmic side of the membrane; the sequence is MQDLR. A helical transmembrane segment spans residues 6–26; the sequence is LMLLLFGVITIIVLFLHGVWA. Residues 27 to 277 lie on the Cytoplasmic side of the membrane; sequence RRKERSALFY…NALIRSTPHL (251 aa). Positions 120 to 139 are disordered; it reads QKKSDDLSHQSKETHHPSIQ.

The protein belongs to the ZipA family. Interacts with FtsZ via their C-terminal domains.

The protein resides in the cell inner membrane. Essential cell division protein that stabilizes the FtsZ protofilaments by cross-linking them and that serves as a cytoplasmic membrane anchor for the Z ring. Also required for the recruitment to the septal ring of downstream cell division proteins. The sequence is that of Cell division protein ZipA from Hamiltonella defensa subsp. Acyrthosiphon pisum (strain 5AT).